The following is a 289-amino-acid chain: MVGVKPVGSDPDFQPELSGAGSRLAVVKFTMRGCGPCLRIAPAFSSMSNKYPQAVFLEVDVHQCQGTAATNNISATPTFLFFRNKVRIDQYQGADAVGLEEKIKQHLENDPGSNEDADIPKGYMDLMPFINKAGCECLNESDEHGFDNCLRKDMSFLESDCDEQLLITVAFNQPVKLYSMKFQGPDNGQGPKYVKIFINLPRSMDFEEAERSEPTQALELTEDDIKEDGIVPLRYVKFQNVNSVTLFVQSNQGEEETTRISYFTFIGTPVQATNMNDFKRVVGKKGESH.

The 108-residue stretch at V2–N109 folds into the Thioredoxin domain. C34 and C37 are disulfide-bonded. A Phosphoserine modification is found at S113. Positions E115–K285 constitute a PITH domain.

In terms of assembly, component of the 19S regulatory cap of the 26S proteasome. Interacts with PSMD14/RPN11. Interacts with, and reduces EEF1A1.

The protein localises to the cytoplasm. It localises to the nucleus. In terms of biological role, active thioredoxin with a redox potential of about -250 mV. In Mus musculus (Mouse), this protein is Thioredoxin-like protein 1 (Txnl1).